Reading from the N-terminus, the 634-residue chain is Chaperone protein HtpG (634 aa).

Residues 1–342 (MTVDTDKQTL…SADLSLNVSR (342 aa)) are a; substrate-binding. The interval 343–559 (EILQSGPVVD…QGDLGLQMRQ (217 aa)) is b. Positions 560–634 (LLEASGQAVP…LNKLLLELSA (75 aa)) are c.

The protein belongs to the heat shock protein 90 family. Homodimer.

It is found in the cytoplasm. Functionally, molecular chaperone. Has ATPase activity. The sequence is that of Chaperone protein HtpG from Xanthomonas campestris pv. campestris (strain ATCC 33913 / DSM 3586 / NCPPB 528 / LMG 568 / P 25).